We begin with the raw amino-acid sequence, 173 residues long: Large ribosomal subunit protein uL16 (173 aa).

The protein belongs to the universal ribosomal protein uL16 family.

This Methanococcus maripaludis (strain DSM 14266 / JCM 13030 / NBRC 101832 / S2 / LL) protein is Large ribosomal subunit protein uL16.